The following is a 194-amino-acid chain: Protein phosphatase 1 regulatory subunit 1B (194 aa).

Met-1 is subject to N-acetylmethionine. Positions 1–194 (MDPKDRKKIQ…GEEPQHPSPP (194 aa)) are disordered. Thr-34 carries the phosphothreonine; by PKA modification. A compositionally biased stretch (basic and acidic residues) spans 41-63 (VSEHSSPEEEASPHQRTSGEGHH). Phosphoserine occurs at positions 45 and 46. Phosphothreonine is present on Thr-75. Positions 84–95 (HLQTISNLSENQ) are enriched in polar residues. Ser-97 and Ser-130 each carry phosphoserine. The segment covering 113–131 (QEDDEEDEDEEEDEEEDSQ) has biased composition (acidic residues). A compositionally biased stretch (basic and acidic residues) spans 160–170 (PPLDEPQRDGN). Position 192 is a phosphoserine (Ser-192).

The protein belongs to the protein phosphatase inhibitor 1 family. Post-translationally, dopamine- and cyclic AMP-regulated neuronal phosphoprotein. In terms of processing, phosphorylation of Thr-34 is required for activity.

It localises to the cytoplasm. Inhibitor of protein-phosphatase 1. In Mus musculus (Mouse), this protein is Protein phosphatase 1 regulatory subunit 1B (Ppp1r1b).